A 355-amino-acid chain; its full sequence is Uroporphyrinogen decarboxylase (355 aa).

Substrate-binding positions include 27 to 31 (RQAGR), aspartate 77, tyrosine 154, threonine 209, and histidine 327.

This sequence belongs to the uroporphyrinogen decarboxylase family. As to quaternary structure, homodimer.

It localises to the cytoplasm. The catalysed reaction is uroporphyrinogen III + 4 H(+) = coproporphyrinogen III + 4 CO2. It participates in porphyrin-containing compound metabolism; protoporphyrin-IX biosynthesis; coproporphyrinogen-III from 5-aminolevulinate: step 4/4. Functionally, catalyzes the decarboxylation of four acetate groups of uroporphyrinogen-III to yield coproporphyrinogen-III. The protein is Uroporphyrinogen decarboxylase of Tolumonas auensis (strain DSM 9187 / NBRC 110442 / TA 4).